A 348-amino-acid polypeptide reads, in one-letter code: MADSHKINFEPVDIEMDVREDENILDAAFRQGIHLMHGCREGRCSACKSYVLDGEIQMENYSTFACNDAEVDEGFVLLCRSHAFSDCTIELLNFDEDELLGGIPIQDVRTEVLAVEPKTRDIVSLRLKPVEPGKFDFKPGQYADLHIPGTEEHRSFSMATTPSCSDEVEFLIKKYPGGKFSALLDGHIQVGDEIALTGPYGSFTLKDGHVLPVVCIGGGAGMAPILSLLRHMNETGNGRPARFYYGARTAADLFYLDEILELGKGIKDFQFIACLSESAEGQVPGAVAVEEGMVTDVVARHESAIAKTEVYLCGPPPMVDAALGFLDANSVPKDQVFYDSFTSPIFDQ.

Residues 5-95 (HKINFEPVDI…DCTIELLNFD (91 aa)) form the 2Fe-2S ferredoxin-type domain. 4 residues coordinate [2Fe-2S] cluster: cysteine 39, cysteine 44, cysteine 47, and cysteine 79. Positions 105–206 (IQDVRTEVLA…TGPYGSFTLK (102 aa)) constitute an FAD-binding FR-type domain.

This sequence belongs to the bacterial ring-hydroxylating dioxygenase ferredoxin reductase family. As to quaternary structure, the propane 2-monooxygenase multicomponent enzyme system is composed of an electron transfer component and a monooxygenase component interacting with the effector protein MimD. The electron transfer component is composed of a reductase (MimB), and the monooxygenase component is formed by a large subunit (MimA) and a small subunit (MimC). Requires FAD as cofactor. [2Fe-2S] cluster serves as cofactor.

Reductase component of the propane 2-monooxygenase multicomponent enzyme system which is involved in the degradation of propane via the O2-dependent hydroxylation of propane. Reductase catalyzes the transfer of electrons from NADH or NADPH to monooxygenase. The sequence is that of Propane 2-monooxygenase, reductase component from Mycolicibacterium goodii (Mycobacterium goodii).